The sequence spans 486 residues: Glycogen synthase (486 aa).

Lys-15 serves as a coordination point for ADP-alpha-D-glucose.

It belongs to the glycosyltransferase 1 family. Bacterial/plant glycogen synthase subfamily.

The enzyme catalyses [(1-&gt;4)-alpha-D-glucosyl](n) + ADP-alpha-D-glucose = [(1-&gt;4)-alpha-D-glucosyl](n+1) + ADP + H(+). It functions in the pathway glycan biosynthesis; glycogen biosynthesis. Synthesizes alpha-1,4-glucan chains using ADP-glucose. The sequence is that of Glycogen synthase from Thermotoga petrophila (strain ATCC BAA-488 / DSM 13995 / JCM 10881 / RKU-1).